Reading from the N-terminus, the 73-residue chain is Translation initiation factor IF-1 1 (73 aa).

Residues 1-72 (MAKEELIEFG…TKGRINFRHK (72 aa)) form the S1-like domain.

The protein belongs to the IF-1 family. In terms of assembly, component of the 30S ribosomal translation pre-initiation complex which assembles on the 30S ribosome in the order IF-2 and IF-3, IF-1 and N-formylmethionyl-tRNA(fMet); mRNA recruitment can occur at any time during PIC assembly.

It localises to the cytoplasm. In terms of biological role, one of the essential components for the initiation of protein synthesis. Stabilizes the binding of IF-2 and IF-3 on the 30S subunit to which N-formylmethionyl-tRNA(fMet) subsequently binds. Helps modulate mRNA selection, yielding the 30S pre-initiation complex (PIC). Upon addition of the 50S ribosomal subunit IF-1, IF-2 and IF-3 are released leaving the mature 70S translation initiation complex. In Cupriavidus metallidurans (strain ATCC 43123 / DSM 2839 / NBRC 102507 / CH34) (Ralstonia metallidurans), this protein is Translation initiation factor IF-1 1.